A 103-amino-acid chain; its full sequence is UPF0134 protein MPN_484 (103 aa).

Belongs to the UPF0134 family.

The protein is UPF0134 protein MPN_484 of Mycoplasma pneumoniae (strain ATCC 29342 / M129 / Subtype 1) (Mycoplasmoides pneumoniae).